Reading from the N-terminus, the 456-residue chain is UPF0496 protein 4 (456 aa).

Residues 195–217 (VLMRALYGIESVTVFVCSIFVAV) form a helical membrane-spanning segment. The segment at 368–390 (QDSNVKQANGSSDESALVVPERT) is disordered. A compositionally biased stretch (polar residues) spans 371–381 (NVKQANGSSDE).

This sequence belongs to the ROH1 family.

It localises to the membrane. This Oryza sativa subsp. japonica (Rice) protein is UPF0496 protein 4.